The following is a 213-amino-acid chain: Glycerol-3-phosphate acyltransferase (213 aa).

6 consecutive transmembrane segments (helical) span residues 4-24 (IILLLIASYLLGAIPFGLWIG), 48-68 (ILGVKAGISVFAFDLLKGTLA), 71-91 (LPLFFHINGVSPLIFGLLAVI), 113-133 (VILGFSPLFLIYLLVVFIIVL), 144-164 (VIGAVFALLGILIFPSIGFIL), and 165-185 (TSYDLLFSIIIFVLAIIIILR).

The protein belongs to the PlsY family. In terms of assembly, probably interacts with PlsX.

The protein localises to the cell membrane. It carries out the reaction an acyl phosphate + sn-glycerol 3-phosphate = a 1-acyl-sn-glycero-3-phosphate + phosphate. It participates in lipid metabolism; phospholipid metabolism. Catalyzes the transfer of an acyl group from acyl-phosphate (acyl-PO(4)) to glycerol-3-phosphate (G3P) to form lysophosphatidic acid (LPA). This enzyme utilizes acyl-phosphate as fatty acyl donor, but not acyl-CoA or acyl-ACP. This is Glycerol-3-phosphate acyltransferase from Lactococcus lactis subsp. lactis (strain IL1403) (Streptococcus lactis).